The chain runs to 429 residues: MDIKYNELVNQFAPGAKQITIKKIRKKGNGIFSLNRYTSGTVLLEVPLENIICRKTVEQFRNSCDKFASIATLEEWNDMSFRTQAMLFLCYLWLGIQPRTNKWDKFLTVLPLSINTPAQWPEKEVYSLQGTSIFNPVCVKRKILQQEWLSLNQRYSDSWPSKITLPKWVHADALFHSRCLESPFKDPVLAPVIDLCNHSSKSNAKWSFSEDAMQLYLDKDIDENEEVTINYGSEKGSAEFLFSYGFLPEPEGDRITNVMKLLIPEDSNDSLDLAKRRSCKTPPMIEFVSDSSGELWWHAPFLFFSVLNVEDFTNFKMVCDESKAQTVDWEFEGQKCSVEDLPKLVQLSPKRDLYILRVFCLAEQLADAALNTNIENMYNPTERRSESVELLKRESFLLKKVLLYLRDVISKLLKSKVVVEFIHSQTIES.

The SET domain maps to 17–232 (KQITIKKIRK…ENEEVTINYG (216 aa)).

Belongs to the class V-like SAM-binding methyltransferase superfamily.

Its subcellular location is the cytoplasm. It is found in the nucleus. The chain is SET domain-containing protein 8 (set8) from Schizosaccharomyces pombe (strain 972 / ATCC 24843) (Fission yeast).